An 86-amino-acid chain; its full sequence is Bradykinin-potentiating peptide 25.12 (86 aa).

An N-terminal signal peptide occupies residues 1–22 (MNKRVLLVIFFVTLLIADEVNS). A disordered region spans residues 67–86 (APAAAAAPEEPPVEQRRRRR).

The protein belongs to the non-disulfide-bridged peptide (NDBP) superfamily. Long chain multifunctional peptide (group 2) family. Expressed by the venom gland.

It localises to the secreted. Inhibits angiotensin-converting enzyme (ACE), but does not serve as substrate for the enzyme. Potentiates bradykinin (BK) on the isolated guinea pig ileum as well as the isolated rat uterus for contraction. Also potentiates in vivo the depressor effect of BK on arterial blood pressure in the normotensive anesthetized rat. The sequence is that of Bradykinin-potentiating peptide 25.12 from Lychas mucronatus (Chinese swimming scorpion).